The chain runs to 168 residues: Phosphopantetheine adenylyltransferase (168 aa).

Threonine 10 is a binding site for substrate. ATP is bound by residues 10–11 and histidine 18; that span reads TF. Residues lysine 42, leucine 74, and arginine 88 each contribute to the substrate site. Residues 89-91, glutamate 99, and 124-130 each bind ATP; these read GLR and NSFISST.

It belongs to the bacterial CoaD family. In terms of assembly, homohexamer. Mg(2+) is required as a cofactor.

The protein localises to the cytoplasm. The catalysed reaction is (R)-4'-phosphopantetheine + ATP + H(+) = 3'-dephospho-CoA + diphosphate. Its pathway is cofactor biosynthesis; coenzyme A biosynthesis; CoA from (R)-pantothenate: step 4/5. Its function is as follows. Reversibly transfers an adenylyl group from ATP to 4'-phosphopantetheine, yielding dephospho-CoA (dPCoA) and pyrophosphate. The polypeptide is Phosphopantetheine adenylyltransferase (Shewanella frigidimarina (strain NCIMB 400)).